The following is a 37-amino-acid chain: Cytochrome b6-f complex subunit 5 (37 aa).

Residues 5-25 (LLSGIVLGLIVVTLAGLFYAA) form a helical membrane-spanning segment.

This sequence belongs to the PetG family. As to quaternary structure, the 4 large subunits of the cytochrome b6-f complex are cytochrome b6, subunit IV (17 kDa polypeptide, PetD), cytochrome f and the Rieske protein, while the 4 small subunits are PetG, PetL, PetM and PetN. The complex functions as a dimer.

It localises to the cellular thylakoid membrane. Functionally, component of the cytochrome b6-f complex, which mediates electron transfer between photosystem II (PSII) and photosystem I (PSI), cyclic electron flow around PSI, and state transitions. PetG is required for either the stability or assembly of the cytochrome b6-f complex. This Anabaena variabilis protein is Cytochrome b6-f complex subunit 5.